The primary structure comprises 502 residues: Beta-glucosidase 7 (502 aa).

A signal peptide spans Met1 to Ala22. A beta-D-glucoside contacts are provided by residues Gln42, His140, and Asn185 to Glu186. The Proton donor role is filled by Glu186. Asn208 carries an N-linked (GlcNAc...) asparagine glycan. Tyr325 serves as a coordination point for a beta-D-glucoside. A glycan (N-linked (GlcNAc...) asparagine) is linked at Asn359. Glu392 serves as a coordination point for a beta-D-glucoside. Glu392 functions as the Nucleophile in the catalytic mechanism. N-linked (GlcNAc...) asparagine glycosylation occurs at Asn425. A beta-D-glucoside is bound by residues Trp435 and Tyr451. Asn457 and Asn479 each carry an N-linked (GlcNAc...) asparagine glycan.

This sequence belongs to the glycosyl hydrolase 1 family.

The catalysed reaction is Hydrolysis of terminal, non-reducing beta-D-glucosyl residues with release of beta-D-glucose.. The chain is Beta-glucosidase 7 from Arabidopsis thaliana (Mouse-ear cress).